An 89-amino-acid chain; its full sequence is UPF0250 protein Bphyt_0500 (89 aa).

This sequence belongs to the UPF0250 family.

In Paraburkholderia phytofirmans (strain DSM 17436 / LMG 22146 / PsJN) (Burkholderia phytofirmans), this protein is UPF0250 protein Bphyt_0500.